A 201-amino-acid chain; its full sequence is Small ribosomal subunit protein uS4c (201 aa).

The disordered stretch occupies residues 20 to 43 (GLTNKRPKSRNDPTNQSSSRKISQ). Residues 31-41 (DPTNQSSSRKI) show a composition bias toward polar residues. In terms of domain architecture, S4 RNA-binding spans 89 to 157 (MRLDNIIFRL…IGKNLDLSQK (69 aa)).

This sequence belongs to the universal ribosomal protein uS4 family. In terms of assembly, part of the 30S ribosomal subunit. Contacts protein S5. The interaction surface between S4 and S5 is involved in control of translational fidelity.

The protein resides in the plastid. The protein localises to the chloroplast. Its function is as follows. One of the primary rRNA binding proteins, it binds directly to 16S rRNA where it nucleates assembly of the body of the 30S subunit. In terms of biological role, with S5 and S12 plays an important role in translational accuracy. This Cycas taitungensis (Prince sago) protein is Small ribosomal subunit protein uS4c (rps4).